Consider the following 185-residue polypeptide: Large ribosomal subunit protein uL5 (185 aa).

This sequence belongs to the universal ribosomal protein uL5 family. Part of the 50S ribosomal subunit; part of the 5S rRNA/L5/L18/L25 subcomplex. Contacts the 5S rRNA and the P site tRNA. Forms a bridge to the 30S subunit in the 70S ribosome.

In terms of biological role, this is one of the proteins that bind and probably mediate the attachment of the 5S RNA into the large ribosomal subunit, where it forms part of the central protuberance. In the 70S ribosome it contacts protein S13 of the 30S subunit (bridge B1b), connecting the 2 subunits; this bridge is implicated in subunit movement. Contacts the P site tRNA; the 5S rRNA and some of its associated proteins might help stabilize positioning of ribosome-bound tRNAs. The chain is Large ribosomal subunit protein uL5 from Brucella abortus (strain S19).